Consider the following 292-residue polypeptide: Medium chain reductase/dehydrogenase ucsI (292 aa).

Cys43 is a Zn(2+) binding site. Tyr49 provides a ligand contact to substrate. Zn(2+) is bound by residues His65 and Glu66. NAD(+)-binding positions include 184–189 (GCGPVG), Asp208, Arg213, and 276–278 (IGA).

The protein belongs to the zinc-containing alcohol dehydrogenase family. It depends on Zn(2+) as a cofactor.

It participates in mycotoxin biosynthesis. Medium chain reductase/dehydrogenase; part of the gene cluster that mediates the biosynthesis of UCS1025A, a member of the pyrrolizidinone family that acts as a strong telomerase inhibitor and displays potent antibacterial and antitumor properties. These compounds share a hemiaminal-containing pyrrolizidinone core fused with a gamma-lactone, giving a furopyrrolizidine that is connected to a decalin fragment. The polyketide synthase module (PKS) of the PKS-NRPS ucsA is responsible for the synthesis of the polyketide backbone via the condensation of an acetyl-CoA starter unit with 6 malonyl-CoA units. The downstream nonribosomal peptide synthetase (NRPS) module then amidates the carboxyl end of the polyketide with a 2S,3S-methylproline derived from L-isoleucine by the 2-oxoglutarate-dependent dioxygenase ucsF which converts L-isoleucine to (4S,5S)-4-methylpyrroline-5-carboxylate that is further converted to 2S,3S-methylproline by the pyrroline-5-carboxylate reductase ucsG. Reductive release of the completed aminoacyl polyketide from the assembly line can form the 3-pyrrolin-2-one structure via an intramolecular Knoevenagel reaction. Because ucsA lacks a designated enoylreductase (ER) domain, the required activity is provided the enoyl reductase ucsL. This keto acyclic precursor is the substrate of the Diels-Alderase ucsH, that catalyzes the Diels-Alder cycloaddition. Oxidation of the 3S-methyl group to a carboxylate by the cytochrome P450 monooxygenase ucsK allows an oxa-Michael cyclization that might involve the reductase/dehydrogenase ucsI and which furnishes the furopyrrolizidine. The oxidase ucsJ likely plays a critical role in stereoselective reduction of the C5-C6 double bond to afford the required R-configured carboxylate group. Further enolization and oxidation at C5 by an unidentified enzyme affords the last intermediate that can undergo oxa-Michael cyclization to yield UCS1025A. The polypeptide is Medium chain reductase/dehydrogenase ucsI (Acremonium sp).